Reading from the N-terminus, the 250-residue chain is Sugar fermentation stimulation protein homolog (250 aa).

It belongs to the SfsA family.

The protein is Sugar fermentation stimulation protein homolog of Synechococcus sp. (strain CC9311).